The following is a 256-amino-acid chain: Large ribosomal subunit protein bL28m (256 aa).

A mitochondrion-targeting transit peptide spans 1–55 (MPLHKYPVWLWKRLQLREGICSRLPGHYLRSLEEERTPTPVHYRPHGAKFKINPK).

Belongs to the bacterial ribosomal protein bL28 family. As to quaternary structure, component of the mitochondrial large ribosomal subunit (mt-LSU). Mature mammalian 55S mitochondrial ribosomes consist of a small (28S) and a large (39S) subunit. The 28S small subunit contains a 12S ribosomal RNA (12S mt-rRNA) and 30 different proteins. The 39S large subunit contains a 16S rRNA (16S mt-rRNA), a copy of mitochondrial valine transfer RNA (mt-tRNA(Val)), which plays an integral structural role, and 52 different proteins. Interacts with OXA1L. In terms of tissue distribution, found in a variety of normal tissues including spleen, testes, thymus, liver, kidney, brain, adrenal, lung and retinal tissue.

It localises to the mitochondrion. In Homo sapiens (Human), this protein is Large ribosomal subunit protein bL28m (MRPL28).